Reading from the N-terminus, the 614-residue chain is Sorting nexin-18 (614 aa).

The 61-residue stretch at 1 to 61 folds into the SH3 domain; sequence MALRARALYD…PASYVQVIRA (61 aa). The interval 85–218 is disordered; the sequence is GFEPLPAAPP…SQELGHGEPQ (134 aa). The segment covering 90–101 has biased composition (pro residues); the sequence is PAAPPAAFPPLL. The span at 141 to 151 shows a compositional bias: acidic residues; the sequence is SDDDWDDEWDD. The PX domain occupies 266–376; it reads FQCTIDDPTK…HFLTCPSSTD (111 aa). A 1,2-diacyl-sn-glycero-3-phospho-(1D-myo-inositol-4,5-bisphosphate) is bound by residues R302, K304, and R342. Positions 411 to 614 constitute a BAR domain; it reads LQEVESKIDG…EEALHKYDSV (204 aa).

This sequence belongs to the sorting nexin family. Heterodimer with SNX9. Interacts with ITCH. Interacts with dynamin-2 (DNM2), SYNJ1 and WASL. Interacts with the AP-1 complex. Interacts with FCHSD1 (via the F-BAR domain).

It localises to the endomembrane system. The protein resides in the endosome membrane. Its subcellular location is the recycling endosome membrane. It is found in the cell membrane. The protein localises to the cytoplasmic vesicle membrane. Functionally, involved in endocytosis and intracellular vesicle trafficking, both during interphase and at the end of mitosis. Required for efficient progress through mitosis and cytokinesis. Required for normal formation of the cleavage furrow at the end of mitosis. Plays a role in endocytosis via clathrin-coated pits, but also clathrin-independent, actin-dependent fluid-phase endocytosis. Plays a role in macropinocytosis. Binds to membranes enriched in phosphatidylinositol 4,5-bisphosphate and promotes membrane tubulation. Stimulates the GTPase activity of DNM2. Promotes DNM2 location at the plasma membrane. Together with DNM2, involved in autophagosome assembly by regulating trafficking from recycling endosomes of phospholipid scramblase ATG9A. In Mus musculus (Mouse), this protein is Sorting nexin-18.